The sequence spans 457 residues: G-protein coupled receptor 135 (457 aa).

Residues 1-26 (MEEQARPPGRPAASATLQGSAHPGGA) are disordered. Topologically, residues 1 to 64 (MEEQARPPGR…EAAGSRGPAP (64 aa)) are extracellular. Residue Asn47 is glycosylated (N-linked (GlcNAc...) asparagine). A helical transmembrane segment spans residues 65–85 (LLWHGAAVAAQALVLLLIFLL). Topologically, residues 86–109 (SSLGNCAVMGVIVKHRQLRTVTNA) are cytoplasmic. A helical membrane pass occupies residues 110 to 130 (FILSLSLSDLLTALLCLPAAF). Residues 131–156 (LDLFAPPGDSGPWRSFCAASRFFSSC) lie on the Extracellular side of the membrane. A helical membrane pass occupies residues 157-177 (FGIVSTFSVALISLDRYCAIV). The Cytoplasmic segment spans residues 178–189 (RPPRDKLGRRRA). A helical transmembrane segment spans residues 190–210 (LQLLAGAWLAALGFSLPWDLL). Residues 211–235 (RAPREPPAPQSFHRCLYRTSPDPAQ) lie on the Extracellular side of the membrane. Residues 236-256 (LGVAYSVGLVVACYLLPFLLM) form a helical membrane-spanning segment. The Cytoplasmic segment spans residues 257–295 (CFCRYHICKTVRLSDVRVRPMTTYARVLRFFSEVRTATT). The helical transmembrane segment at 296 to 316 (VLIMIIFVMCCWGPYCFLVLL) threads the bilayer. Over 317 to 329 (AATRQGQATQAPS) the chain is Extracellular. A helical transmembrane segment spans residues 330–350 (LLNVAAVWLTWANGAINPVIY). Topologically, residues 351–457 (AIRNPNISML…HNSETRDSSI (107 aa)) are cytoplasmic.

Belongs to the G-protein coupled receptor 1 family. In terms of assembly, interacts with MTNR1B. Interacts with ARRB1 and ARRB2 in a spontaneous and agonist-independent manner; leading to the internalization of GPR135 in the endosomal compartment.

The protein resides in the cell membrane. It is found in the endosome membrane. Orphan receptor. Has spontaneous activity for beta-arrestin recruitment. Shows a reciprocal regulatory interaction with the melatonin receptor MTNR1B most likely through receptor heteromerization. This chain is G-protein coupled receptor 135 (Gpr135), found in Mus musculus (Mouse).